A 735-amino-acid polypeptide reads, in one-letter code: Polycomb protein sop-2 (735 aa).

A compositionally biased stretch (polar residues) spans M1–A15. Disordered stretches follow at residues M1 to S59, A223 to A288, and P300 to Q534. The segment at A224–S503 is RNA-binding. Positions Y239–A288 are enriched in low complexity. Composition is skewed to basic and acidic residues over residues D317–R355 and R389–D398. Residues S399–N413 are compositionally biased toward acidic residues. Over residues V450 to A470 the composition is skewed to basic and acidic residues. The segment covering A471–S504 has biased composition (low complexity). Residues L520–Q534 are compositionally biased toward polar residues. The interval L621 to R712 is SAM-like.

In terms of assembly, homodimer. Interacts with ubc-9. Binds through its N-terminal region to the N-terminal region of sor-1. Post-translationally, sumoylated by ubc-9. Sumoylation is required for the transcriptional regulation of homeotic genes. As to expression, widely expressed. Weakly expressed in most somatic cells of 50-cell stage embryos. At 200 cell stage, it is strongly expressed. By comma stage, it is expressed in most somatic cells.

It localises to the nucleus. In terms of biological role, polycomb group (PcG) protein. PcG proteins act by forming multiprotein complexes, which are required to maintain the transcriptionally repressive state of homeotic genes throughout development. PcG proteins are not required to initiate repression, but to maintain it during later stages of development. Also required to repress expression of other genes and for localization of sor-1. Binds RNA. In Caenorhabditis elegans, this protein is Polycomb protein sop-2 (sop-2).